The chain runs to 419 residues: Equilibrative nucleotide transporter 5 (419 aa).

11 consecutive transmembrane segments (helical) span residues 20–40 (MVVC…LLSV), 56–76 (VLTF…AYNE), 86–106 (LIGY…DLAT), 108–128 (GHGG…FGFA), 142–162 (LMCP…GALT), 186–206 (IFLA…AYVF), 265–285 (YVVN…GFLY), 292–312 (GLGS…DLVG), 327–347 (KGLT…YFTA), 354–374 (WMIL…VCIL), and 393–413 (LVLF…LWLI).

This sequence belongs to the SLC29A/ENT transporter (TC 2.A.57) family.

The protein resides in the cell membrane. In terms of biological role, may be involved in nucleoside transport. The sequence is that of Equilibrative nucleotide transporter 5 (ENT5) from Arabidopsis thaliana (Mouse-ear cress).